We begin with the raw amino-acid sequence, 140 residues long: Nucleoside diphosphate kinase (140 aa).

ATP-binding residues include Lys11, Phe59, Arg87, Thr93, Arg104, and Asn114. Residue His117 is the Pros-phosphohistidine intermediate of the active site.

It belongs to the NDK family. Homotetramer. It depends on Mg(2+) as a cofactor.

The protein localises to the cytoplasm. It carries out the reaction a 2'-deoxyribonucleoside 5'-diphosphate + ATP = a 2'-deoxyribonucleoside 5'-triphosphate + ADP. The enzyme catalyses a ribonucleoside 5'-diphosphate + ATP = a ribonucleoside 5'-triphosphate + ADP. Major role in the synthesis of nucleoside triphosphates other than ATP. The ATP gamma phosphate is transferred to the NDP beta phosphate via a ping-pong mechanism, using a phosphorylated active-site intermediate. In Gluconobacter oxydans (strain 621H) (Gluconobacter suboxydans), this protein is Nucleoside diphosphate kinase.